The primary structure comprises 312 residues: Ribosomal RNA small subunit methyltransferase H (312 aa).

Residues 34 to 36 (AGH), Asp-54, Phe-81, Asp-102, and Gln-109 contribute to the S-adenosyl-L-methionine site.

Belongs to the methyltransferase superfamily. RsmH family.

The protein localises to the cytoplasm. It catalyses the reaction cytidine(1402) in 16S rRNA + S-adenosyl-L-methionine = N(4)-methylcytidine(1402) in 16S rRNA + S-adenosyl-L-homocysteine + H(+). Functionally, specifically methylates the N4 position of cytidine in position 1402 (C1402) of 16S rRNA. In Citrifermentans bemidjiense (strain ATCC BAA-1014 / DSM 16622 / JCM 12645 / Bem) (Geobacter bemidjiensis), this protein is Ribosomal RNA small subunit methyltransferase H.